The chain runs to 410 residues: Multifunctional CCA protein (410 aa).

Residues glycine 8 and arginine 11 each contribute to the ATP site. The CTP site is built by glycine 8 and arginine 11. Residues glutamate 21 and aspartate 23 each coordinate Mg(2+). Residues arginine 91, arginine 137, and arginine 140 each coordinate ATP. Residues arginine 91, arginine 137, and arginine 140 each coordinate CTP. Residues 228 to 329 (TGIHVMMALR…LKLFDRLDVW (102 aa)) enclose the HD domain.

The protein belongs to the tRNA nucleotidyltransferase/poly(A) polymerase family. Bacterial CCA-adding enzyme type 1 subfamily. As to quaternary structure, monomer. Can also form homodimers and oligomers. It depends on Mg(2+) as a cofactor. Requires Ni(2+) as cofactor.

It carries out the reaction a tRNA precursor + 2 CTP + ATP = a tRNA with a 3' CCA end + 3 diphosphate. It catalyses the reaction a tRNA with a 3' CCA end + 2 CTP + ATP = a tRNA with a 3' CCACCA end + 3 diphosphate. Functionally, catalyzes the addition and repair of the essential 3'-terminal CCA sequence in tRNAs without using a nucleic acid template. Adds these three nucleotides in the order of C, C, and A to the tRNA nucleotide-73, using CTP and ATP as substrates and producing inorganic pyrophosphate. tRNA 3'-terminal CCA addition is required both for tRNA processing and repair. Also involved in tRNA surveillance by mediating tandem CCA addition to generate a CCACCA at the 3' terminus of unstable tRNAs. While stable tRNAs receive only 3'-terminal CCA, unstable tRNAs are marked with CCACCA and rapidly degraded. The protein is Multifunctional CCA protein of Tolumonas auensis (strain DSM 9187 / NBRC 110442 / TA 4).